Consider the following 475-residue polypeptide: F-box/kelch-repeat protein At1g22040 (475 aa).

A disordered region spans residues 1–28 (MGSVMSLSCSKRKATSQDVECSSESRKR). Positions 41–87 (CRLIPSLPDELSIQILARLPRICYSSVRLVSRRWRSAVSTSEVYSLR) constitute an F-box domain. Kelch repeat units follow at residues 94–140 (EEWL…KSLS), 182–228 (GLYV…VLNK), 229–279 (KLYV…AFLA), 306–350 (PFFV…VDGE), and 352–401 (YAFD…GFHG).

The sequence is that of F-box/kelch-repeat protein At1g22040 from Arabidopsis thaliana (Mouse-ear cress).